Consider the following 88-residue polypeptide: MDILKLSDFIGNTLIVSLTEDRILVGSLVAVDAQMNLLLDHVEERMGSSSRMMGLVSVPRRSVKTIMIDKPVLQELTANKVELMANIV.

The 72-residue stretch at 1–72 (MDILKLSDFI…VKTIMIDKPV (72 aa)) folds into the Sm domain.

In terms of assembly, component of the N-terminal acetyltransferase C (NatC) complex, composed of the catalytic subunit Naa30/MAK3, a large auxiliary subunit Naa35/MAK10 and a small auxiliary subunit Naa38/MAK31.

Component of the NatC N-terminal acetyltransferase, which associates with the ribosome to acetylate nascent protein chains in a cotranslational manner. NatC acetylates protein N-termini starting with methionine, followed by a hydrophobic or amphipathic amino acid, with amino acids at positions 3 and 4 also contributing to NatC recognition. The first 4 amino acids of cognate substrates are recognized at the Naa30/MAK3-Naa35/MAK10 interface. NatC-dependent acetylation targets various substrate proteins to specific subcellular sites, including isoform 2 of tRNA-specific methyltransferase Trm1 to the inner nuclear membrane. Catalyzes the acetylation of the N-terminal Met of ARF-like GTPase ARL3, which is required for its Golgi localization via interaction with the Golgi-localized integral membrane protein SYS1, which may serve as a receptor for acetylated ARL3. Catalyzes the acetylation of the N-terminal Met of L-A virus Gag protein. MAK31 is necessary for the structural stability of L-A double-stranded RNA-containing particles. Necessary for growth at 37 degrees Celsius as well as for maintenance of the killer plasmid. The polypeptide is N-alpha-acetyltransferase 38, NatC auxiliary subunit (MAK31) (Saccharomyces cerevisiae (strain ATCC 204508 / S288c) (Baker's yeast)).